An 89-amino-acid chain; its full sequence is Small ribosomal subunit protein bS18 (89 aa).

The protein belongs to the bacterial ribosomal protein bS18 family. In terms of assembly, part of the 30S ribosomal subunit. Forms a tight heterodimer with protein bS6.

Binds as a heterodimer with protein bS6 to the central domain of the 16S rRNA, where it helps stabilize the platform of the 30S subunit. The chain is Small ribosomal subunit protein bS18 from Parabacteroides distasonis (strain ATCC 8503 / DSM 20701 / CIP 104284 / JCM 5825 / NCTC 11152).